Here is a 1374-residue protein sequence, read N- to C-terminus: DNA-directed RNA polymerase subunit beta (1374 aa).

This sequence belongs to the RNA polymerase beta chain family. In terms of assembly, the RNAP catalytic core consists of 2 alpha, 1 beta, 1 beta' and 1 omega subunit. When a sigma factor is associated with the core the holoenzyme is formed, which can initiate transcription.

The enzyme catalyses RNA(n) + a ribonucleoside 5'-triphosphate = RNA(n+1) + diphosphate. Its function is as follows. DNA-dependent RNA polymerase catalyzes the transcription of DNA into RNA using the four ribonucleoside triphosphates as substrates. The sequence is that of DNA-directed RNA polymerase subunit beta from Methylobacterium nodulans (strain LMG 21967 / CNCM I-2342 / ORS 2060).